A 262-amino-acid chain; its full sequence is Global transcriptional regulator CodY (262 aa).

Residues 1–159 are GAF domain; the sequence is MATLLEKTRK…ATTVIGVQLS (159 aa). The segment at residues 207–226 is a DNA-binding region (H-T-H motif); that stretch reads ASVIADKIGITRSVIVNALR.

The protein belongs to the CodY family.

The protein localises to the cytoplasm. Functionally, DNA-binding global transcriptional regulator which is involved in the adaptive response to starvation and acts by directly or indirectly controlling the expression of numerous genes in response to nutrient availability. During rapid exponential growth, CodY is highly active and represses genes whose products allow adaptation to nutrient depletion. The polypeptide is Global transcriptional regulator CodY (Lactococcus lactis subsp. cremoris (strain SK11)).